The following is a 330-amino-acid chain: Putative 1-aminocyclopropane-1-carboxylate deaminase (330 aa).

K54 carries the post-translational modification N6-(pyridoxal phosphate)lysine.

The protein belongs to the ACC deaminase/D-cysteine desulfhydrase family. Pyridoxal 5'-phosphate serves as cofactor.

The enzyme catalyses 1-aminocyclopropane-1-carboxylate + H2O = 2-oxobutanoate + NH4(+). In Pyrococcus abyssi (strain GE5 / Orsay), this protein is Putative 1-aminocyclopropane-1-carboxylate deaminase.